The sequence spans 874 residues: Alanine--tRNA ligase (874 aa).

His-564, His-568, Cys-665, and His-669 together coordinate Zn(2+).

It belongs to the class-II aminoacyl-tRNA synthetase family. Requires Zn(2+) as cofactor.

Its subcellular location is the cytoplasm. The catalysed reaction is tRNA(Ala) + L-alanine + ATP = L-alanyl-tRNA(Ala) + AMP + diphosphate. Catalyzes the attachment of alanine to tRNA(Ala) in a two-step reaction: alanine is first activated by ATP to form Ala-AMP and then transferred to the acceptor end of tRNA(Ala). Also edits incorrectly charged Ser-tRNA(Ala) and Gly-tRNA(Ala) via its editing domain. The polypeptide is Alanine--tRNA ligase (Burkholderia multivorans (strain ATCC 17616 / 249)).